A 78-amino-acid chain; its full sequence is Defensin-like protein 171 (78 aa).

The signal sequence occupies residues M1–Q23. Disulfide bonds link C27-C71, C34-C56, C40-C65, and C44-C67.

Belongs to the DEFL family.

It is found in the secreted. The sequence is that of Defensin-like protein 171 (LCR61) from Arabidopsis thaliana (Mouse-ear cress).